The sequence spans 82 residues: Diptericin-A (82 aa).

2 disordered regions span residues Asp-1–Gly-32 and Asp-45–Arg-69. Phe-82 is modified (phenylalanine amide).

This sequence belongs to the attacin/sarcotoxin-2 family.

Its subcellular location is the secreted. Its function is as follows. Antimicrobial peptide required to resist Gram-negative bacterial infections, regulated by Dredd. In Protophormia terraenovae (Northern blowfly), this protein is Diptericin-A.